The chain runs to 124 residues: Probable cytochrome b5 1 (124 aa).

In terms of domain architecture, Cytochrome b5 heme-binding spans 3–79; it reads VKYFEPEEIV…LEEMYIGDLK (77 aa). Heme is bound by residues histidine 38 and histidine 62. A helical transmembrane segment spans residues 100–120; the sequence is PPLPLLIALIVLPAIAVIVFV.

The protein belongs to the cytochrome b5 family.

The protein resides in the endoplasmic reticulum membrane. The protein localises to the microsome membrane. Functionally, membrane bound hemoprotein which function as an electron carrier for several membrane bound oxygenases. The protein is Probable cytochrome b5 1 of Schizosaccharomyces pombe (strain 972 / ATCC 24843) (Fission yeast).